A 74-amino-acid polypeptide reads, in one-letter code: uncharacterized protein (74 aa).

Residues 55 to 74 (DENSESESKDGASWFKVYRG) are disordered.

This is an uncharacterized protein from Listeria innocua serovar 6a (strain ATCC BAA-680 / CLIP 11262).